Reading from the N-terminus, the 140-residue chain is ATP synthase epsilon chain (140 aa).

Belongs to the ATPase epsilon chain family. As to quaternary structure, F-type ATPases have 2 components, CF(1) - the catalytic core - and CF(0) - the membrane proton channel. CF(1) has five subunits: alpha(3), beta(3), gamma(1), delta(1), epsilon(1). CF(0) has three main subunits: a, b and c.

It is found in the cell inner membrane. Functionally, produces ATP from ADP in the presence of a proton gradient across the membrane. The polypeptide is ATP synthase epsilon chain (Colwellia psychrerythraea (strain 34H / ATCC BAA-681) (Vibrio psychroerythus)).